The sequence spans 161 residues: Cytidylate kinase (161 aa).

ATP is bound at residue 7 to 15; that stretch reads GLAGTGTTT.

The protein belongs to the cytidylate kinase family. Type 2 subfamily.

Its subcellular location is the cytoplasm. It catalyses the reaction CMP + ATP = CDP + ADP. The enzyme catalyses dCMP + ATP = dCDP + ADP. The polypeptide is Cytidylate kinase (cmk) (Methanothermobacter thermautotrophicus (strain ATCC 29096 / DSM 1053 / JCM 10044 / NBRC 100330 / Delta H) (Methanobacterium thermoautotrophicum)).